Here is a 233-residue protein sequence, read N- to C-terminus: Probable tetraheme cytochrome c-type (233 aa).

A signal peptide spans 1–28 (MTRLQKGSIGTLLTGALLGIVLVAVVFG). 14 residues coordinate heme: Cys-39, Cys-42, Met-45, Cys-67, Cys-70, His-71, Glu-93, Cys-131, Cys-134, His-135, Cys-159, Cys-162, His-163, and His-168. The tract at residues 182 to 233 (QGKLVLKPEDDGDDEEADEDEDEETEEADDSSDSESASSSDNSDNEDDNNDE) is disordered. Acidic residues-rich tracts occupy residues 191–214 (DDGD…DSSD) and 224–233 (SDNEDDNNDE).

Belongs to the NapC/NirT/NrfH family. In terms of processing, binds 4 heme groups per subunit.

The protein localises to the periplasm. This chain is Probable tetraheme cytochrome c-type (cycX1), found in Nitrosomonas europaea (strain ATCC 19718 / CIP 103999 / KCTC 2705 / NBRC 14298).